A 145-amino-acid chain; its full sequence is Transcription antitermination protein NusB (145 aa).

The protein belongs to the NusB family.

Involved in transcription antitermination. Required for transcription of ribosomal RNA (rRNA) genes. Binds specifically to the boxA antiterminator sequence of the ribosomal RNA (rrn) operons. This is Transcription antitermination protein NusB from Burkholderia vietnamiensis (strain G4 / LMG 22486) (Burkholderia cepacia (strain R1808)).